The primary structure comprises 303 residues: Glycine betaine/carnitine/choline-binding protein OpuCC (303 aa).

The signal sequence occupies residues 1–20; the sequence is MTKIKWLGAFALVFVMLLGG. Cysteine 21 carries the N-palmitoyl cysteine lipid modification. A lipid anchor (S-diacylglycerol cysteine) is attached at cysteine 21.

It belongs to the OsmX family. In terms of assembly, the complex is composed of two ATP-binding proteins (OpuCA), two transmembrane proteins (OpuCB and OpuCD) and a solute-binding protein (OpuCC).

The protein localises to the cell membrane. Member of a high affinity multicomponent binding-protein-dependent transport system for glycine betaine, carnitine, and choline. The chain is Glycine betaine/carnitine/choline-binding protein OpuCC (opuCC) from Bacillus subtilis (strain 168).